We begin with the raw amino-acid sequence, 577 residues long: Proline--tRNA ligase (577 aa).

It belongs to the class-II aminoacyl-tRNA synthetase family. ProS type 1 subfamily. Homodimer.

It localises to the cytoplasm. It catalyses the reaction tRNA(Pro) + L-proline + ATP = L-prolyl-tRNA(Pro) + AMP + diphosphate. In terms of biological role, catalyzes the attachment of proline to tRNA(Pro) in a two-step reaction: proline is first activated by ATP to form Pro-AMP and then transferred to the acceptor end of tRNA(Pro). As ProRS can inadvertently accommodate and process non-cognate amino acids such as alanine and cysteine, to avoid such errors it has two additional distinct editing activities against alanine. One activity is designated as 'pretransfer' editing and involves the tRNA(Pro)-independent hydrolysis of activated Ala-AMP. The other activity is designated 'posttransfer' editing and involves deacylation of mischarged Ala-tRNA(Pro). The misacylated Cys-tRNA(Pro) is not edited by ProRS. The polypeptide is Proline--tRNA ligase (Thermotoga sp. (strain RQ2)).